A 170-amino-acid chain; its full sequence is Tubulin polymerization-promoting protein family member 2 (170 aa).

Residues 127–170 (TGTHKERFDESGKGKGIAGREEMTDNTGYVSGYKGSGTYDKKTK) are disordered. The span at 129-149 (THKERFDESGKGKGIAGREEM) shows a compositional bias: basic and acidic residues.

It belongs to the TPPP family. In terms of tissue distribution, expressed in spermatids. Detected in liver cancer (at protein level).

The protein localises to the cytoplasm. It is found in the cytosol. Its subcellular location is the cell projection. The protein resides in the cilium. It localises to the flagellum. Functionally, probable regulator of microtubule dynamics required for sperm motility. In contrast to other members of the family, has no microtubule bundling activity. The sequence is that of Tubulin polymerization-promoting protein family member 2 from Homo sapiens (Human).